Reading from the N-terminus, the 253-residue chain is Vitamin B12 import ATP-binding protein BtuD (253 aa).

One can recognise an ABC transporter domain in the interval 1–236 (MTNQLMALNQ…NTLSRVFAAD (236 aa)). 34–41 (GPNGSGKS) lines the ATP pocket.

Belongs to the ABC transporter superfamily. Vitamin B12 importer (TC 3.A.1.13.1) family. The complex is composed of two ATP-binding proteins (BtuD), two transmembrane proteins (BtuC) and a solute-binding protein (BtuF).

Its subcellular location is the cell inner membrane. The enzyme catalyses an R-cob(III)alamin(out) + ATP + H2O = an R-cob(III)alamin(in) + ADP + phosphate + H(+). Its function is as follows. Part of the ABC transporter complex BtuCDF involved in vitamin B12 import. Responsible for energy coupling to the transport system. This chain is Vitamin B12 import ATP-binding protein BtuD, found in Photorhabdus laumondii subsp. laumondii (strain DSM 15139 / CIP 105565 / TT01) (Photorhabdus luminescens subsp. laumondii).